The primary structure comprises 1132 residues: Phosphatidylinositide phosphatase SAC2 (1132 aa).

The region spanning 167-518 (LKMFMDSESF…GDSISRQYAG (352 aa)) is the SAC domain. In terms of domain architecture, hSac2 spans 593–760 (RSHQELISQL…KSSKPHEDII (168 aa)). Phosphoserine is present on residues Ser-827 and Ser-830. A disordered region spans residues 846-875 (ESDGDMSSDNDSYHSDEFLTNSKSDEDRQL). Positions 856–874 (DSYHSDEFLTNSKSDEDRQ) are enriched in basic and acidic residues. Ser-878, Ser-881, Ser-907, and Ser-910 each carry phosphoserine. 2 disordered regions span residues 923 to 942 (VAHG…KSPS) and 974 to 1017 (LSET…LDVS). A Phosphoserine modification is found at Ser-1103.

In terms of assembly, homodimer. Interacts with OCRL and RAB5A. Interacts with INPP5B and INPP4A. Interacts with STAT3; the interaction is independent of STAT3 'Tyr-705' phosphorylation status. Ubiquitous. Highly expressed in brain.

It is found in the membrane. The protein localises to the clathrin-coated pit. It localises to the early endosome. Its subcellular location is the recycling endosome. It catalyses the reaction a myo-inositol phosphate + H2O = myo-inositol + phosphate. Functionally, inositol 4-phosphatase which mainly acts on phosphatidylinositol 4-phosphate. May be functionally linked to OCRL, which converts phosphatidylinositol 4,5-bisphosphate to phosphatidylinositol, for a sequential dephosphorylation of phosphatidylinositol 4,5-bisphosphate at the 5 and 4 position of inositol, thus playing an important role in the endocytic recycling. Regulator of TF:TFRC and integrins recycling pathway, is also involved in cell migration mechanisms. Modulates AKT/GSK3B pathway by decreasing AKT and GSK3B phosphorylation. Negatively regulates STAT3 signaling pathway through inhibition of STAT3 phosphorylation and translocation to the nucleus. Functionally important modulator of cardiac myocyte size and of the cardiac response to stress. May play a role as negative regulator of axon regeneration after central nervous system injuries. This is Phosphatidylinositide phosphatase SAC2 from Homo sapiens (Human).